Reading from the N-terminus, the 249-residue chain is Cytokine-inducible SH2-containing protein (249 aa).

Positions 41-64 are disordered; the sequence is AFPEEPAPTFAAPEPDGSAPQTRD. The 82-residue stretch at 84–165 folds into the SH2 domain; it reads WYWGSITASE…PDVVSLIQHY (82 aa). Positions 200 to 248 constitute an SOCS box domain; that stretch reads KLLRPLGRRDSIPSLQHLCRLRINRCTTEVERLPLPRRMGDYLKQYPFQ.

It participates in protein modification; protein ubiquitination. SOCS family proteins form part of a classical negative feedback system that regulates cytokine signal transduction. CIS is involved in the negative regulation of cytokines that signal through the JAK-STAT5 pathway such as erythropoietin, prolactin and interleukin 3 (IL3) receptor. Inhibits STAT5 trans-activation by suppressing its tyrosine phosphorylation. May be a substrate-recognition component of a SCF-like ECS (Elongin BC-CUL2/5-SOCS-box protein) E3 ubiquitin-protein ligase complex which mediates the ubiquitination and subsequent proteasomal degradation of target proteins. This is Cytokine-inducible SH2-containing protein (CISH) from Gallus gallus (Chicken).